The chain runs to 199 residues: 7-methyl-GTP pyrophosphatase (199 aa).

Asp-73 functions as the Proton acceptor in the catalytic mechanism.

Belongs to the Maf family. YceF subfamily. A divalent metal cation is required as a cofactor.

It localises to the cytoplasm. The catalysed reaction is N(7)-methyl-GTP + H2O = N(7)-methyl-GMP + diphosphate + H(+). Nucleoside triphosphate pyrophosphatase that hydrolyzes 7-methyl-GTP (m(7)GTP). May have a dual role in cell division arrest and in preventing the incorporation of modified nucleotides into cellular nucleic acids. In Bordetella pertussis (strain Tohama I / ATCC BAA-589 / NCTC 13251), this protein is 7-methyl-GTP pyrophosphatase.